Consider the following 472-residue polypeptide: UDP-glycosyltransferase 2 (472 aa).

UDP-alpha-D-glucose-binding positions include serine 283, 348–349, 366–374, and 388–391; these read WA, HCGWNSVLE, and YAEQ.

Belongs to the UDP-glycosyltransferase family. In terms of tissue distribution, highly expressed in roots. Expressed in leaves and stems.

Glycosyltransferase that possesses isoflavonoids 4'-O- and 7-O-glucosyltransferase activities. Shows a successive glucosylation toward the acceptors producing their corresponding 4',7-O-diglucosides. Can use genistein, formononetin, daidzein, liquiritigenin and naringenin as substrates. Also shows a 3'-O-glucosylation activity in vitro. The chain is UDP-glycosyltransferase 2 from Pueraria montana var. lobata (Kudzu vine).